Consider the following 380-residue polypeptide: Cytochrome b (380 aa).

Transmembrane regions (helical) follow at residues 34 to 54 (FGSLLGLCLMTQILTGLLLAM), 78 to 99 (WLIRNLHANGASFFFICIYLHI), 114 to 134 (WNTGVILLLTLMATAFVGYVL), and 179 to 199 (FFALHFLLPFMIAGLTLIHLT). Heme b is bound by residues histidine 84 and histidine 98. Residues histidine 183 and histidine 197 each coordinate heme b. Histidine 202 provides a ligand contact to a ubiquinone. The next 4 membrane-spanning stretches (helical) occupy residues 227–247 (TKDLLGFLLMIAPLLTLAMFS), 289–309 (LGGVLALAASVLILFLAPFLH), 321–341 (LSQLLFWILVANLLILTWVGS), and 348–368 (FIIIGQIASLTYFTILLILFP).

This sequence belongs to the cytochrome b family. In terms of assembly, the cytochrome bc1 complex contains 11 subunits: 3 respiratory subunits (MT-CYB, CYC1 and UQCRFS1), 2 core proteins (UQCRC1 and UQCRC2) and 6 low-molecular weight proteins (UQCRH/QCR6, UQCRB/QCR7, UQCRQ/QCR8, UQCR10/QCR9, UQCR11/QCR10 and a cleavage product of UQCRFS1). This cytochrome bc1 complex then forms a dimer. Heme b is required as a cofactor.

It is found in the mitochondrion inner membrane. Its function is as follows. Component of the ubiquinol-cytochrome c reductase complex (complex III or cytochrome b-c1 complex) that is part of the mitochondrial respiratory chain. The b-c1 complex mediates electron transfer from ubiquinol to cytochrome c. Contributes to the generation of a proton gradient across the mitochondrial membrane that is then used for ATP synthesis. This Amazilia tzacatl (Rufous-tailed hummingbird) protein is Cytochrome b (MT-CYB).